We begin with the raw amino-acid sequence, 370 residues long: Uroporphyrinogen decarboxylase (370 aa).

Substrate-binding positions include 29–33 (RQAGR), Asp-79, Tyr-155, Ser-210, and His-342.

The protein belongs to the uroporphyrinogen decarboxylase family. In terms of assembly, homodimer.

Its subcellular location is the cytoplasm. It carries out the reaction uroporphyrinogen III + 4 H(+) = coproporphyrinogen III + 4 CO2. It participates in porphyrin-containing compound metabolism; protoporphyrin-IX biosynthesis; coproporphyrinogen-III from 5-aminolevulinate: step 4/4. Catalyzes the decarboxylation of four acetate groups of uroporphyrinogen-III to yield coproporphyrinogen-III. The protein is Uroporphyrinogen decarboxylase of Variovorax paradoxus (strain S110).